A 273-amino-acid chain; its full sequence is Diaminopimelate epimerase (273 aa).

The substrate site is built by N11 and N60. C69 serves as the catalytic Proton donor. Substrate contacts are provided by residues 70 to 71 (GN), N181, and 199 to 200 (ER). C209 acts as the Proton acceptor in catalysis. 210 to 211 (GT) provides a ligand contact to substrate.

Belongs to the diaminopimelate epimerase family. Homodimer.

The protein resides in the cytoplasm. The enzyme catalyses (2S,6S)-2,6-diaminopimelate = meso-2,6-diaminopimelate. It participates in amino-acid biosynthesis; L-lysine biosynthesis via DAP pathway; DL-2,6-diaminopimelate from LL-2,6-diaminopimelate: step 1/1. In terms of biological role, catalyzes the stereoinversion of LL-2,6-diaminopimelate (L,L-DAP) to meso-diaminopimelate (meso-DAP), a precursor of L-lysine and an essential component of the bacterial peptidoglycan. The polypeptide is Diaminopimelate epimerase (Helicobacter pylori (strain Shi470)).